The chain runs to 267 residues: MNALLTNPFKERLRKGEVQIGLWLSSTTAYMAEIAATSGYDWLLIDGEHAPNTIQDLYHQLQAVAPYASHPVIRPVEGSKPLIKQVLDIGAQTLLIPMVDTADQARQVVSATRYPPYGERGVGASVARAARWGRIENYMAQVNDSLCLLVQVESKTALDNLDEILDVEGIDGVFIGPADLSASLGYPDNAGHQEVQRIIETSIRRIRAAGKAAGFLAVAPDMAQQCLAWGTNFVAVGVDTMLYSDALDQRLAMFKSGKNGPRVKGSY.

Catalysis depends on His49, which acts as the Proton acceptor. A substrate-binding site is contributed by Gln151. Glu153 lines the Mg(2+) pocket. Substrate contacts are provided by Ala178 and Asp179. Asp179 lines the Mg(2+) pocket.

The protein belongs to the HpcH/HpaI aldolase family. KDR aldolase subfamily. In terms of assembly, homohexamer. Mg(2+) serves as cofactor.

It catalyses the reaction 2-dehydro-3-deoxy-L-rhamnonate = (S)-lactaldehyde + pyruvate. Functionally, catalyzes the reversible retro-aldol cleavage of 2-keto-3-deoxy-L-rhamnonate (KDR) to pyruvate and lactaldehyde. The chain is 2-keto-3-deoxy-L-rhamnonate aldolase from Escherichia coli O6:K15:H31 (strain 536 / UPEC).